Consider the following 74-residue polypeptide: Antitoxin VapB39 (74 aa).

Antitoxin component of a type II toxin-antitoxin (TA) system. This chain is Antitoxin VapB39 (vapB39), found in Mycobacterium tuberculosis (strain CDC 1551 / Oshkosh).